Here is a 332-residue protein sequence, read N- to C-terminus: L-lactate dehydrogenase A chain (332 aa).

A2 carries the post-translational modification N-acetylalanine. K5 is modified (N6-acetyllysine; alternate). At K5 the chain carries N6-succinyllysine; alternate. K14 bears the N6-acetyllysine mark. 29–57 serves as a coordination point for NAD(+); it reads GAVGMACAISILMKDLADEVALVDVMEDK. Position 57 is an N6-acetyllysine; alternate (K57). K57 participates in a covalent cross-link: Glycyl lysine isopeptide (Lys-Gly) (interchain with G-Cter in SUMO2); alternate. K81 is modified (N6-acetyllysine). R106 provides a ligand contact to substrate. An N6-acetyllysine; alternate modification is found at K118. K118 is subject to N6-succinyllysine; alternate. An N6-acetyllysine modification is found at K126. N138 serves as a coordination point for NAD(+). Substrate is bound by residues N138 and R169. H193 acts as the Proton acceptor in catalysis. Residues K224 and K232 each carry the N6-acetyllysine modification. Residue Y239 is modified to Phosphotyrosine. Residue K243 is modified to N6-acetyllysine. A substrate-binding site is contributed by T248. T309 is modified (phosphothreonine). At K318 the chain carries N6-acetyllysine; alternate. Residue K318 is modified to N6-succinyllysine; alternate. T322 carries the post-translational modification Phosphothreonine.

It belongs to the LDH/MDH superfamily. LDH family. In terms of assembly, homotetramer. Interacts with PTEN upstream reading frame protein MP31. Post-translationally, ISGylated.

It is found in the cytoplasm. It catalyses the reaction (S)-lactate + NAD(+) = pyruvate + NADH + H(+). Its pathway is fermentation; pyruvate fermentation to lactate; (S)-lactate from pyruvate: step 1/1. Interconverts simultaneously and stereospecifically pyruvate and lactate with concomitant interconversion of NADH and NAD(+). The polypeptide is L-lactate dehydrogenase A chain (LDHA) (Bos taurus (Bovine)).